We begin with the raw amino-acid sequence, 310 residues long: MKPKIFIDGEHGTTGLQIRVRMAGRTDLELLSIPEAERRNAAMREDLLNSADIAILCLPDDASREAVAMVAGNNRVRIIDTSTAHRVAPDWAYGFAEMDKAQPQRIRDARHVANPGCYPTGAIALIRPLRQAGILPDGYPVTVNAVSGYTGGGKQMIAQMEDDQNPDHIGAPHFLYGLTLKHKHVPEMKMHGLLERAPVFSPSVGKFAQGMIVQVPLYLEDLAAGATLETIHRALVDHYAGQSIVEVVPLDESAKLARIDATELAGSDAMKLFVFGTKGGAHVNLVALLDNLGKGASGAAVQNMDLMLSA.

C117 is an active-site residue.

This sequence belongs to the NAGSA dehydrogenase family. Type 2 subfamily.

It is found in the cytoplasm. It carries out the reaction N-acetyl-L-glutamate 5-semialdehyde + phosphate + NADP(+) = N-acetyl-L-glutamyl 5-phosphate + NADPH + H(+). Its pathway is amino-acid biosynthesis; L-arginine biosynthesis; N(2)-acetyl-L-ornithine from L-glutamate: step 3/4. Its function is as follows. Catalyzes the NADPH-dependent reduction of N-acetyl-5-glutamyl phosphate to yield N-acetyl-L-glutamate 5-semialdehyde. The protein is N-acetyl-gamma-glutamyl-phosphate reductase of Rhizobium meliloti (strain 1021) (Ensifer meliloti).